The chain runs to 165 residues: MPAKSRSARLTHLDDAGLPTMVDVSGKAITARSATAESRVRFPAAVAAQLRANGLRSAKGGIVETAVIAGTMAVKRTHELIPFCHPLPIDACRFEIDWAGEQVLDIRCTVRCVHRTGVEMEALTGASVAALTVYDMCKALSHSMSIGPTRLVSKRGGKRDIGAAQ.

Residues 83 to 85 (FCH) and 120 to 121 (ME) each bind substrate. Asp-135 is an active-site residue.

It belongs to the MoaC family. Homohexamer; trimer of dimers.

It catalyses the reaction (8S)-3',8-cyclo-7,8-dihydroguanosine 5'-triphosphate = cyclic pyranopterin phosphate + diphosphate. The protein operates within cofactor biosynthesis; molybdopterin biosynthesis. In terms of biological role, catalyzes the conversion of (8S)-3',8-cyclo-7,8-dihydroguanosine 5'-triphosphate to cyclic pyranopterin monophosphate (cPMP). In Xanthomonas oryzae pv. oryzae (strain MAFF 311018), this protein is Cyclic pyranopterin monophosphate synthase.